Consider the following 169-residue polypeptide: Small ribosomal subunit protein uS5c (169 aa).

An S5 DRBM domain is found at 17 to 80 (WQERVVQIRR…ADGKKHVVEV (64 aa)).

Belongs to the universal ribosomal protein uS5 family. Part of the 30S ribosomal subunit. Contacts protein S4.

It is found in the plastid. The protein resides in the cyanelle. Functionally, with S4 and S12 plays an important role in translational accuracy. This chain is Small ribosomal subunit protein uS5c (rps5), found in Cyanophora paradoxa.